The primary structure comprises 493 residues: Aluminum-activated malate transporter 1 (493 aa).

The next 5 helical transmembrane spans lie at 28 to 48, 51 to 71, 104 to 124, 133 to 153, and 169 to 189; these read VGLA…GPFT, FGIN…FSVG, TVEP…STFV, KFDY…LSGF, and VVIG…VWAG. A phosphoserine mark is found at Ser-320 and Ser-327. The residue at position 385 (Thr-385) is a Phosphothreonine. Over residues 441–452 the composition is skewed to basic and acidic residues; it reads DNDRSNNVDDSR. The segment at 441–460 is disordered; that stretch reads DNDRSNNVDDSRGGSSQDSC.

Belongs to the aromatic acid exporter (TC 2.A.85) family. Phosphorylated. A reversible phosphorylation is required for activation. In terms of tissue distribution, expressed in roots, but not in shoots. Detected in the root apex in absence of aluminum stress and in root apices, the stele and endodermis of the elongating zone of primary and lateral roots after aluminum stress. Not expressed in cortical and epidermal cells.

The protein resides in the cell membrane. With respect to regulation, activated by external aluminum. Its function is as follows. Malate transporter critical for aluminum tolerance. The STOP1 transcription factor is required for ALMT1 expression. This is Aluminum-activated malate transporter 1 (ALMT1) from Arabidopsis thaliana (Mouse-ear cress).